Here is a 231-residue protein sequence, read N- to C-terminus: Ion-translocating oxidoreductase complex subunit E (231 aa).

The next 6 helical transmembrane spans lie at 18–38, 39–59, 63–83, 86–106, 125–145, and 182–202; these read ALVQ…ATNA, LGLG…ISTL, TPAE…VSAV, LINA…PLIV, ALSA…MFVL, and PFLL…MLAG.

Belongs to the NqrDE/RnfAE family. In terms of assembly, the complex is composed of six subunits: RsxA, RsxB, RsxC, RsxD, RsxE and RsxG.

It localises to the cell inner membrane. Part of a membrane-bound complex that couples electron transfer with translocation of ions across the membrane. Required to maintain the reduced state of SoxR. The chain is Ion-translocating oxidoreductase complex subunit E from Escherichia coli O7:K1 (strain IAI39 / ExPEC).